A 150-amino-acid polypeptide reads, in one-letter code: Ribonuclease H (150 aa).

An RNase H type-1 domain is found at 1 to 141 (MKSIEVHTDG…VDVLARNQAT (141 aa)). 4 residues coordinate Mg(2+): Asp9, Glu47, Asp69, and Asp133.

The protein belongs to the RNase H family. In terms of assembly, monomer. Mg(2+) serves as cofactor.

It localises to the cytoplasm. The enzyme catalyses Endonucleolytic cleavage to 5'-phosphomonoester.. In terms of biological role, endonuclease that specifically degrades the RNA of RNA-DNA hybrids. This Xanthomonas oryzae pv. oryzae (strain MAFF 311018) protein is Ribonuclease H.